The sequence spans 1049 residues: Toll-like receptor 7 (1049 aa).

The signal sequence occupies residues 1–26 (MVFPMWTLKRQILILFNIILISKLLG). The Extracellular portion of the chain corresponds to 27-839 (ARWFPKTLPC…LYTCELDLTN (813 aa)). LRR repeat units follow at residues 43 to 64 (PKNHVIVDCTDKHLTEIPGGIP), 65 to 87 (TNTTNLTLTINHIPDISPASFHR), 110 to 126 (NMCIKRLQIKPRSFSGL), 127 to 149 (TYLKSLYLDGNQLLEIPQGLPPS), 151 to 170 (QLLSLEANNIFSIRKENLTE), and 171 to 195 (LANIEILYLGQNCYYRNPCYVSYSI). Residues Asn-66 and Asn-69 are each glycosylated (N-linked (GlcNAc...) asparagine). N-linked (GlcNAc...) asparagine glycosylation occurs at Asn-167. N-linked (GlcNAc...) asparagine glycosylation is found at Asn-202 and Asn-215. LRR repeat units follow at residues 203–226 (LTKLKVLSLKDNNVTAVPTVLPST), 228–247 (TELYLYNNMIAKIQEDDFNN), 248–275 (LNQLQILDLSGNCPRCYNAPFPCAPCKN), 289–312 (LTELKVLRLHSNSLQHVPPRWFKN), 314–337 (NKLQELDLSQNFLAKEIGDAKFLH), 339–368 (LPSLIQLDLSFNFELQVYRASMNLSQAFSS), 369–392 (LKSLKILRIRGYVFKELKSFNLSP), 396–419 (LQNLEVLDLGTNFIKIANLSMFKQ), and 421–443 (KRLKVIDLSVNKISPSGDSSEVG). N-linked (GlcNAc...) asparagine glycosylation occurs at Asn-361. An N-linked (GlcNAc...) asparagine glycan is attached at Asn-413. Residue Asn-488 is glycosylated (N-linked (GlcNAc...) asparagine). 4 LRR repeats span residues 492–515 (YKYGQTLDLSKNSIFFVKSSDFQH), 516–540 (LSFLKCLNLSGNLISQTLNGSEFQP), 541–564 (LAELRYLDFSNNRLDLLHSTAFEE), and 566–588 (HKLEVLDISSNSHYFQSEGITHM). Residues Asn-523 and Asn-534 are each glycosylated (N-linked (GlcNAc...) asparagine). N-linked (GlcNAc...) asparagine glycosylation is present at Asn-590. 8 LRR repeats span residues 595 to 618 (LKVLQKLMMNDNDISSSTSRTMES), 619 to 644 (ESLRTLEFRGNHLDVLWREGDNRYLQ), 649 to 672 (LLKLEELDISKNSLSFLPSGVFDG), 674 to 697 (PPNLKNLSLAKNGLKSFSWKKLQC), 698 to 721 (LKNLETLDLSHNQLTTVPERLSNC), 723 to 745 (RSLKNLILKNNQIRSLTKYFLQD), 746 to 769 (AFQLRYLDLSSNKIQMIQKTSFPE), and 772 to 795 (LNNLKMLLLHHNRFLCTCDAVWFV). 2 N-linked (GlcNAc...) asparagine glycosylation sites follow: Asn-679 and Asn-720. Residue Asn-799 is glycosylated (N-linked (GlcNAc...) asparagine). Residues 840-860 (LILFSLSISVSLFLMVMMTAS) form a helical membrane-spanning segment. Topologically, residues 861-1049 (HLYFWDVWYI…AYSQVFKETV (189 aa)) are cytoplasmic. Residues 889–1033 (CCYDAFIVYD…YFWQCLKNAL (145 aa)) form the TIR domain.

It belongs to the Toll-like receptor family. Homodimer. Interacts with MYD88 via their respective TIR domains. Interacts with UNC93B1. Interacts with SMPDL3B. As to expression, detected in brain, placenta, spleen, stomach, small intestine, lung and in plasmacytoid pre-dendritic cells. Expressed in peripheral mononuclear blood cells.

It localises to the endoplasmic reticulum membrane. Its subcellular location is the endosome. It is found in the lysosome. The protein resides in the cytoplasmic vesicle. The protein localises to the phagosome. Activated by guanosine analogs including deoxyguanosine, 7-thia-8-oxoguanosine or 7-deazaguanosine in a RNA-independent manner. Activated by imiquimod. In terms of biological role, endosomal receptor that plays a key role in innate and adaptive immunity. Controls host immune response against pathogens through recognition of uridine-containing single strand RNAs (ssRNAs) of viral origin or guanosine analogs. Upon binding to agonists, undergoes dimerization that brings TIR domains from the two molecules into direct contact, leading to the recruitment of TIR-containing downstream adapter MYD88 through homotypic interaction. In turn, the Myddosome signaling complex is formed involving IRAK4, IRAK1, TRAF6, TRAF3 leading to activation of downstream transcription factors NF-kappa-B and IRF7 to induce pro-inflammatory cytokines and interferons, respectively. In plasmacytoid dendritic cells, RNASET2 endonuclease cooperates with PLD3 or PLD4 5'-&gt;3' exonucleases to process RNA and release 2',3'-cyclic guanosine monophosphate (2',3'-cGMP) and cytidine-rich RNA fragments that occupy TLR7 ligand-binding pockets and trigger a signaling-competent state. This chain is Toll-like receptor 7, found in Homo sapiens (Human).